We begin with the raw amino-acid sequence, 125 residues long: Prepro-urotensin II-alpha (125 aa).

Positions 1-21 (MMCNLLLSFSVLLLSCTHLVA) are cleaved as a signal peptide. The propeptide occupies 109–111 (QFR). A disulfide bridge links Cys119 with Cys124.

Belongs to the urotensin-2 family.

The protein localises to the secreted. Its function is as follows. Urotensin is found in the teleost caudal neurosecretory system. It has a suggested role in osmoregulation and as a corticotropin-releasing factor. The non-hormonal portion of this precursor may be a urotensin binding protein, urophysin. The sequence is that of Prepro-urotensin II-alpha from Cyprinus carpio (Common carp).